Here is a 609-residue protein sequence, read N- to C-terminus: MQVGSKKASMGKQQQSVSDATSPRPPLAPSEKNNVGSVTRRARTMEVSSRYRSPTPTKTRRCPSPIVTRTAPSSSPESFLKRAVSAERNRGPSTPTTPVSDVLVDLPVSSRRLSTGRLPESLWPSTMRSLSVSFQSDSVSVPVSKKEKPLVTSSTDRTLRPSSSNIAHKQQSETTSVTRKQTPERKRSPLKGKNVSPGQSENSKPMDGSHSMLIPPQHRWSGRIRGNRSFDLGDKAVRRVSLPLSNKSSRHKKSSSDITRLFSCYDNGRLEVSSSTTSEDSSSTESLKHFSTSSLPRLHPMSAPGSRTASPSRSSFSSSSSSNSRGMSPSRGVSPMRGLSPVGNRSLVRSSTPPSRGVSPSRIRQTAQSSSTNTSVLSFIADVKKGKKATYIEDVHQLRLLYNRYSQWRFANARAEGVSYVQSLIAKETLYNVWHAISDLRDLVTTQRICLQQLKLEIKLRSILNDQMVCLEDWAMVEREHISSLAGAIGDLEANTLRLPLAGGTKADLGSLKLAMSSALDVMQSMGSSIWSLHSQMEEMNKLVSDLAVIAKTENFLLDKCENLLASTAVMEIEERSLKTHLIQKKQEEEVRDDAESSPLLPLSKFQWP.

Disordered regions lie at residues 1–227 (MQVG…IRGN) and 271–369 (EVSS…TAQS). Polar residues-rich tracts occupy residues 11-21 (GKQQQSVSDAT) and 46-57 (EVSSRYRSPTPT). 2 stretches are compositionally biased toward low complexity: residues 98–110 (PVSDVLVDLPVSS) and 129–143 (SLSVSFQSDSVSVPV). The segment covering 151–180 (VTSSTDRTLRPSSSNIAHKQQSETTSVTRK) has biased composition (polar residues). Composition is skewed to low complexity over residues 271-285 (EVSSSTTSEDSSSTE) and 302-332 (SAPGSRTASPSRSSFSSSSSSNSRGMSPSRG). The QWRF motif signature appears at 407 to 410 (QWRF). Positions 588–609 (EEEVRDDAESSPLLPLSKFQWP) are disordered.

The protein belongs to the QWRF family.

This is QWRF motif-containing protein 4 (QWRF4) from Arabidopsis thaliana (Mouse-ear cress).